The sequence spans 396 residues: Putative pyridoxal phosphate-dependent acyltransferase (396 aa).

111–112 (GF) serves as a coordination point for pyridoxal 5'-phosphate. H136 contacts substrate. Residues S186, 211-214 (DDAH), and 241-244 (TLSK) each bind pyridoxal 5'-phosphate. At K244 the chain carries N6-(pyridoxal phosphate)lysine. T358 contributes to the substrate binding site.

This sequence belongs to the class-II pyridoxal-phosphate-dependent aminotransferase family. In terms of assembly, homodimer. Pyridoxal 5'-phosphate serves as cofactor.

In Bacillus cereus (strain ATCC 14579 / DSM 31 / CCUG 7414 / JCM 2152 / NBRC 15305 / NCIMB 9373 / NCTC 2599 / NRRL B-3711), this protein is Putative pyridoxal phosphate-dependent acyltransferase.